A 1543-amino-acid chain; its full sequence is DNA-directed RNA polymerase subunit beta' (1543 aa).

C60, C62, C75, and C78 together coordinate Zn(2+). 3 residues coordinate Mg(2+): D627, D629, and D631. C1017, C1097, C1104, and C1107 together coordinate Zn(2+). Disordered regions lie at residues 1466-1490 and 1522-1543; these read PADR…APPR and AEEG…EENV.

This sequence belongs to the RNA polymerase beta' chain family. In terms of assembly, the RNAP catalytic core consists of 2 alpha, 1 beta, 1 beta' and 1 omega subunit. When a sigma factor is associated with the core the holoenzyme is formed, which can initiate transcription. Mg(2+) is required as a cofactor. The cofactor is Zn(2+).

The enzyme catalyses RNA(n) + a ribonucleoside 5'-triphosphate = RNA(n+1) + diphosphate. In terms of biological role, DNA-dependent RNA polymerase catalyzes the transcription of DNA into RNA using the four ribonucleoside triphosphates as substrates. In Herpetosiphon aurantiacus (strain ATCC 23779 / DSM 785 / 114-95), this protein is DNA-directed RNA polymerase subunit beta'.